The following is a 170-amino-acid chain: Large ribosomal subunit protein uL11 (170 aa).

This sequence belongs to the universal ribosomal protein uL11 family. As to quaternary structure, part of the ribosomal stalk of the 50S ribosomal subunit. Interacts with L10 and the large rRNA to form the base of the stalk. L10 forms an elongated spine to which L12 dimers bind in a sequential fashion forming a multimeric L10(L12)X complex.

Its function is as follows. Forms part of the ribosomal stalk which helps the ribosome interact with GTP-bound translation factors. The sequence is that of Large ribosomal subunit protein uL11 from Saccharolobus islandicus (strain M.16.27) (Sulfolobus islandicus).